Consider the following 362-residue polypeptide: Dihydroorotate dehydrogenase (quinone) (362 aa).

Residues 62 to 66 (AGYDK) and T86 contribute to the FMN site. K66 contributes to the substrate binding site. 111–115 (NRLGF) serves as a coordination point for substrate. The FMN site is built by N139 and N170. Residue N170 coordinates substrate. S173 acts as the Nucleophile in catalysis. Residue N175 coordinates substrate. Residues K215 and S243 each contribute to the FMN site. Position 244–245 (244–245 (NT)) interacts with substrate. FMN-binding positions include G266, G295, and 316–317 (YS).

It belongs to the dihydroorotate dehydrogenase family. Type 2 subfamily. Monomer. The cofactor is FMN.

The protein localises to the cell membrane. The enzyme catalyses (S)-dihydroorotate + a quinone = orotate + a quinol. The protein operates within pyrimidine metabolism; UMP biosynthesis via de novo pathway; orotate from (S)-dihydroorotate (quinone route): step 1/1. Functionally, catalyzes the conversion of dihydroorotate to orotate with quinone as electron acceptor. The protein is Dihydroorotate dehydrogenase (quinone) of Rhizobium johnstonii (strain DSM 114642 / LMG 32736 / 3841) (Rhizobium leguminosarum bv. viciae).